The following is a 135-amino-acid chain: Galectin-1 (135 aa).

N-acetylalanine is present on A2. The Galectin domain occupies 4–135; that stretch reads GLVASNLNLK…DFKIKCVAFE (132 aa). N6-acetyllysine is present on residues K13, K19, and K29. S30 carries the post-translational modification Phosphoserine. A beta-D-galactoside is bound by residues 45–49, H53, N62, and 69–72; these read HFNPR and WGAE. K128 is subject to N6-acetyllysine.

Homodimer. Binds LGALS3BP. Interacts with CD2, CD3, CD4, CD6, CD7, CD43, ALCAM and CD45. Interacts with laminin (via poly-N-acetyllactosamine). Interacts with SUSD2. Interacts with cargo receptor TMED10; the interaction mediates the translocation from the cytoplasm into the ERGIC (endoplasmic reticulum-Golgi intermediate compartment) and thereby secretion.

The protein resides in the secreted. The protein localises to the extracellular space. Its subcellular location is the extracellular matrix. It localises to the cytoplasm. Lectin that binds beta-galactoside and a wide array of complex carbohydrates. Plays a role in regulating apoptosis, cell proliferation and cell differentiation. Inhibits CD45 protein phosphatase activity and therefore the dephosphorylation of Lyn kinase. Strong inducer of T-cell apoptosis. This is Galectin-1 (LGALS1) from Sus scrofa (Pig).